Consider the following 189-residue polypeptide: Ribonuclease M5 2 (189 aa).

In terms of domain architecture, Toprim spans 8-91 (SQVIVAEGRD…VFLKRDEAVP (84 aa)). Mg(2+)-binding residues include E14, D60, and D62.

It belongs to the ribonuclease M5 family. Requires Mg(2+) as cofactor.

It is found in the cytoplasm. The catalysed reaction is Endonucleolytic cleavage of RNA, removing 21 and 42 nucleotides, respectively, from the 5'- and 3'-termini of a 5S-rRNA precursor.. In terms of biological role, required for correct processing of both the 5' and 3' ends of 5S rRNA precursor. Cleaves both sides of a double-stranded region yielding mature 5S rRNA in one step. This is Ribonuclease M5 2 from Ligilactobacillus salivarius (strain UCC118) (Lactobacillus salivarius).